The sequence spans 388 residues: Probable E3 ubiquitin-protein ligase LOG2 (388 aa).

Residues 1-43 form a disordered region; it reads MGNISSSGGEGRRRRRRNHTAAPPPPPPPPSSSLPPPPLPTEI. Gly2 carries the N-myristoyl glycine lipid modification. The segment covering 22–40 has biased composition (pro residues); that stretch reads APPPPPPPPSSSLPPPPLP. The interval 159–281 is DAR2 domain; the sequence is FTFDATVSGR…GEIKIRVVKQ (123 aa). The RING-type; atypical zinc-finger motif lies at 319–358; sequence CVICLSEPRDTTVLPCRHMCMCSGCAKVLRFQTNRCPICR. Residues 368 to 388 form a disordered region; sequence KVHGNNGSGNNTGQGETVEQE.

This sequence belongs to the RING-type zinc finger family. LOG2 subfamily. In terms of assembly, interacts with GDU1. Post-translationally, myristoylated (in vitro). Expressed in the vascular tissues in both phloem and xylem parenchyma cells.

Its subcellular location is the cell membrane. The catalysed reaction is S-ubiquitinyl-[E2 ubiquitin-conjugating enzyme]-L-cysteine + [acceptor protein]-L-lysine = [E2 ubiquitin-conjugating enzyme]-L-cysteine + N(6)-ubiquitinyl-[acceptor protein]-L-lysine.. It functions in the pathway protein modification; protein ubiquitination. Acts as an E3 ubiquitin-protein ligase, or as part of E3 complex, which accepts ubiquitin from specific E2 ubiquitin-conjugating enzymes and then transfers it to substrates (in vitro). Required for GLUTAMINE DUMPER 1(GDU1)-induced amino acid secretion and for amino acid homeostasis. Ubiquitinates GDU1 (in vitro). In Arabidopsis thaliana (Mouse-ear cress), this protein is Probable E3 ubiquitin-protein ligase LOG2 (LOG2).